We begin with the raw amino-acid sequence, 106 residues long: ATP-dependent Clp protease adapter protein ClpS (106 aa).

The protein belongs to the ClpS family. Binds to the N-terminal domain of the chaperone ClpA.

Functionally, involved in the modulation of the specificity of the ClpAP-mediated ATP-dependent protein degradation. In Salmonella arizonae (strain ATCC BAA-731 / CDC346-86 / RSK2980), this protein is ATP-dependent Clp protease adapter protein ClpS.